We begin with the raw amino-acid sequence, 322 residues long: Cell division control protein 10 (322 aa).

At Met-1 the chain carries N-acetylmethionine. The Septin-type G domain occupies 29-302 (KGFQFNIMVV…EGFRARQLIA (274 aa)). Residues 39 to 46 (GQSGLGKS) form a G1 motif region. GTP is bound by residues 39–46 (GQSGLGKS), Thr-74, Gly-100, and 180–188 (KSDTLTLDE). The segment at 97–100 (DTPG) is G3 motif. Residues 179–182 (GKSD) form a G4 motif region. Position 216 is a phosphothreonine (Thr-216). GTP-binding residues include Gly-236 and Arg-251.

The protein belongs to the TRAFAC class TrmE-Era-EngA-EngB-Septin-like GTPase superfamily. Septin GTPase family. As to quaternary structure, component of the septin complex which consists of CDC3, CDC10, CDC11, CDC12 and probably SHS1 and rearranges to a cortical collar of highly ordered filaments at the mother-bud-neck. A complex formed by CDC3, CDC10, CDC11 and CDC12 is capable of forming long filaments in vitro and the components seem to be present in a 2:2:2:2 arrangement in vivo. The filaments are proposed to be formed by the end-to-end polymerization of CDC3-CDC12-CDC11 complexes with CDC10 serving as a bridge to bundle the polymers into paired filaments. Component of the GIN4 complex composed of at least BNI5, CDC3, CDC10, CDC11, CDC12, GIN4, NAP1 and SHS1. Self-associates. Interacts with SYP1.

The protein resides in the membrane. It localises to the bud neck. In terms of biological role, septins are GTPases involved in cytokinesis that assemble early in the cell cycle as a patch at the incipient bud site and form a ring approximate 15 minutes before bud emergence, which transforms into an hour-glass shaped collar of cortical filaments that spans both sides of the mother-bud neck. This collar persists until just before cytokinesis, when it splits into two rings that occupy opposite sides of the neck. The septins at the bud neck serve as a structural scaffold that recruits different components involved in diverse processes at specific stages during the cell cycle. Many proteins bind asymmetrically to the septin collar. The septin assembly is regulated by protein kinases GIN4 and/or CLA4. May act by recruiting MYO1 and HOF1, a protein involved in septation, to the site of cleavage. Septins are also involved in cell morphogenesis, bud site selection, chitin deposition, cell cycle regulation, cell compartmentalization and spore wall formation. This is Cell division control protein 10 (CDC10) from Saccharomyces cerevisiae (strain ATCC 204508 / S288c) (Baker's yeast).